A 412-amino-acid polypeptide reads, in one-letter code: DnaJ homolog subfamily A member 2 (412 aa).

The J domain maps to 8–70 (KLYDILGVPP…EKRELYDRYG (63 aa)). At Lys-39 the chain carries N6-acetyllysine. 2 positions are modified to phosphoserine: Ser-78 and Ser-123. The CR-type zinc finger occupies 130 to 214 (GKTTKLQLSK…CEGKKVIKEV (85 aa)). A Glycyl lysine isopeptide (Lys-Gly) (interchain with G-Cter in SUMO2) cross-link involves residue Lys-134. Positions 143 and 146 each coordinate Zn(2+). The CXXCXGXG motif repeat unit spans residues 143 to 150 (CSACSGQG). At Lys-152 the chain carries N6-acetyllysine. Zn(2+) is bound by residues Cys-159, Cys-162, Cys-186, Cys-189, Cys-202, and Cys-205. 3 CXXCXGXG motif repeats span residues 159–166 (CSACRGRG), 186–193 (CSDCNGEG), and 202–209 (CKKCEGKK). A disordered region spans residues 365–412 (IGETEEVELQEFDSTRGSGGGQRREAYNDSSDEESSSHHGPGVQCAHQ). Phosphotyrosine is present on Tyr-391. Residues Ser-394 and Ser-395 each carry the phosphoserine modification. At Cys-409 the chain carries Cysteine methyl ester. A lipid anchor (S-farnesyl cysteine) is attached at Cys-409. Positions 410-412 (AHQ) are cleaved as a propeptide — removed in mature form.

The protein resides in the membrane. Co-chaperone of Hsc70. Stimulates ATP hydrolysis and the folding of unfolded proteins mediated by HSPA1A/B (in vitro). This Homo sapiens (Human) protein is DnaJ homolog subfamily A member 2 (DNAJA2).